The primary structure comprises 163 residues: UPF0587 protein CG4646 (163 aa).

Cysteine 33, cysteine 36, cysteine 68, and cysteine 71 together coordinate Zn(2+).

Belongs to the UPF0587 family.

In Drosophila melanogaster (Fruit fly), this protein is UPF0587 protein CG4646.